We begin with the raw amino-acid sequence, 95 residues long: Putative monooxygenase YcnE (95 aa).

An ABM domain is found at 2–93; sequence IVLQAYIKVK…APLDVVRTEL (92 aa). Phosphoserine is present on S24.

This sequence belongs to the LsrG family.

In terms of biological role, putative monooxygenase that may contribute to the degradation of aromatic compounds. The sequence is that of Putative monooxygenase YcnE (ycnE) from Bacillus subtilis (strain 168).